The primary structure comprises 282 residues: Bifunctional protein FolD (282 aa).

NADP(+)-binding positions include 164–166 (GAS), Ile-189, and Ile-230.

This sequence belongs to the tetrahydrofolate dehydrogenase/cyclohydrolase family. In terms of assembly, homodimer.

The enzyme catalyses (6R)-5,10-methylene-5,6,7,8-tetrahydrofolate + NADP(+) = (6R)-5,10-methenyltetrahydrofolate + NADPH. It carries out the reaction (6R)-5,10-methenyltetrahydrofolate + H2O = (6R)-10-formyltetrahydrofolate + H(+). It participates in one-carbon metabolism; tetrahydrofolate interconversion. Catalyzes the oxidation of 5,10-methylenetetrahydrofolate to 5,10-methenyltetrahydrofolate and then the hydrolysis of 5,10-methenyltetrahydrofolate to 10-formyltetrahydrofolate. This Campylobacter jejuni subsp. jejuni serotype O:6 (strain 81116 / NCTC 11828) protein is Bifunctional protein FolD.